The primary structure comprises 332 residues: uncharacterized protein (332 aa).

The disordered stretch occupies residues 306 to 332 (EKNTSEVTEPKTGPSGTKDNYHLHSIF).

This is an uncharacterized protein from Homo sapiens (Human).